A 158-amino-acid chain; its full sequence is Protein-export protein SecB (158 aa).

It belongs to the SecB family. In terms of assembly, homotetramer, a dimer of dimers. One homotetramer interacts with 1 SecA dimer.

The protein resides in the cytoplasm. One of the proteins required for the normal export of preproteins out of the cell cytoplasm. It is a molecular chaperone that binds to a subset of precursor proteins, maintaining them in a translocation-competent state. It also specifically binds to its receptor SecA. This is Protein-export protein SecB from Bartonella quintana (strain Toulouse) (Rochalimaea quintana).